A 103-amino-acid chain; its full sequence is Large ribosomal subunit protein uL24 (103 aa).

Belongs to the universal ribosomal protein uL24 family. In terms of assembly, part of the 50S ribosomal subunit.

One of two assembly initiator proteins, it binds directly to the 5'-end of the 23S rRNA, where it nucleates assembly of the 50S subunit. Its function is as follows. One of the proteins that surrounds the polypeptide exit tunnel on the outside of the subunit. This is Large ribosomal subunit protein uL24 from Glaesserella parasuis serovar 5 (strain SH0165) (Haemophilus parasuis).